The following is a 704-amino-acid chain: MRFLSFWRLLLYHALCLALPEVSAHTVELNEMFGQIQSPGYPDSYPSDSEVTWNITVPEGFRIKLYFMHFNLESSYLCEYDYVKVETEDQVLATFCGRETTDTEQTPGQEVVLSPGTFMSVTFRSDFSNEERFTGFDAHYMAVDVDECKEREDEELSCDHYCHNYIGGYYCSCRFGYILHTDNRTCRVECSGNLFTQRTGTITSPDYPNPYPKSSECSYTIDLEEGFMVSLQFEDIFDIEDHPEVPCPYDYIKIKAGSKVWGPFCGEKSPEPISTQTHSVQILFRSDNSGENRGWRLSYRAAGNECPKLQPPVYGKIEPSQAVYSFKDQVLVSCDTGYKVLKDNEVMDTFQIECLKDGAWSNKIPTCKIVDCGAPAGLKHGLVTFSTRNNLTTYKSEIRYSCQQPYYKMLHNTTGVYTCSAHGTWTNEVLKRSLPTCLPVCGVPKFSRKQISRIFNGRPAQKGTMPWIAMLSHLNGQPFCGGSLLGSNWVLTAAHCLHQSLDPEEPTLHSSYLLSPSDFKIIMGKHWRRRSDEDEQHLHVKRTTLHPLYNPSTFENDLGLVELSESPRLNDFVMPVCLPEQPSTEGTMVIVSGWGKQFLQRFPENLMEIEIPIVNSDTCQEAYTPLKKKVTKDMICAGEKEGGKDACAGDSGGPMVTKDAERDQWYLVGVVSWGEDCGKKDRYGVYSYIYPNKDWIQRITGVRN.

Residues 1–24 (MRFLSFWRLLLYHALCLALPEVSA) form the signal peptide. Positions 25–143 (HTVELNEMFG…TGFDAHYMAV (119 aa)) constitute a CUB 1 domain. A homodimerization region spans residues 25-189 (HTVELNEMFG…HTDNRTCRVE (165 aa)). An interaction with MBL2 region spans residues 25–189 (HTVELNEMFG…HTDNRTCRVE (165 aa)). The segment at 25–283 (HTVELNEMFG…STQTHSVQIL (259 aa)) is interaction with FCN2. The interval 25–305 (HTVELNEMFG…RLSYRAAGNE (281 aa)) is interaction with MBL1. N54 carries an N-linked (GlcNAc...) asparagine glycan. The Ca(2+) site is built by E73, D81, D126, S128, D144, V145, and E147. A disulfide bond links C78 and C96. The region spanning 144–187 (DVDECKEREDEELSCDHYCHNYIGGYYCSCRFGYILHTDNRTCR) is the EGF-like; calcium-binding domain. Cystine bridges form between C148-C162, C158-C171, C173-C186, and C190-C217. 3 residues coordinate Ca(2+): N164, Y165, and G168. N164 is modified ((3R)-3-hydroxyasparagine). Residue N183 is glycosylated (N-linked (GlcNAc...) asparagine). Residues 190 to 302 (CSGNLFTQRT…RGWRLSYRAA (113 aa)) form the CUB 2 domain. Ca(2+)-binding residues include E240, D250, D287, and S289. An intrachain disulfide couples C247 to C265. Sushi domains are found at residues 304 to 369 (NECP…TCKI) and 370 to 439 (VDCG…TCLP). 8 cysteine pairs are disulfide-bonded: C306–C354, C334–C367, C372–C419, C402–C437, C441–C577, C480–C496, C619–C636, and C647–C677. N390 and N412 each carry an N-linked (GlcNAc...) asparagine glycan. Positions 454–701 (IFNGRPAQKG…NKDWIQRITG (248 aa)) constitute a Peptidase S1 domain. Catalysis depends on charge relay system residues H495 and D557. S651 (charge relay system) is an active-site residue.

This sequence belongs to the peptidase S1 family. As to quaternary structure, homodimer. Interacts with the oligomeric lectins MBL2, FCN2 and FCN3; triggers the lectin pathway of complement through activation of C3. Interacts with SERPING1. Interacts with COLEC11; probably triggers the lectin pathway of complement. In terms of processing, the iron and 2-oxoglutarate dependent 3-hydroxylation of aspartate and asparagine is (R) stereospecific within EGF domains. N-glycosylated. Some N-linked glycan are of the complex-type. Post-translationally, autoproteolytic processing of the proenzyme produces the active enzyme composed on the heavy and the light chain held together by a disulfide bond. Isoform 1 but not isoform 2 is activated through autoproteolytic processing. Protein of the plasma which is primarily expressed by liver.

It is found in the secreted. Inhibited by SERPING1 and A2M. In terms of biological role, functions in the lectin pathway of complement, which performs a key role in innate immunity by recognizing pathogens through patterns of sugar moieties and neutralizing them. The lectin pathway is triggered upon binding of mannan-binding lectin (MBL) and ficolins to sugar moieties which leads to activation of the associated proteases MASP1 and MASP2. Functions as an endopeptidase and may activate MASP2 or C2 or directly activate C3 the key component of complement reaction. Isoform 2 may have an inhibitory effect on the activation of the lectin pathway of complement or may cleave IGFBP5. Also plays a role in development. The sequence is that of Mannan-binding lectin serine protease 1 (Masp1) from Mus musculus (Mouse).